A 319-amino-acid polypeptide reads, in one-letter code: Thioredoxin reductase (319 aa).

Thr-36–Gln-43 lines the FAD pocket. Residues Cys-136 and Cys-139 are joined by a disulfide bond. Asp-288 to Ala-297 lines the FAD pocket.

It belongs to the class-II pyridine nucleotide-disulfide oxidoreductase family. In terms of assembly, homodimer. The cofactor is FAD.

It is found in the cytoplasm. It carries out the reaction [thioredoxin]-dithiol + NADP(+) = [thioredoxin]-disulfide + NADPH + H(+). The protein is Thioredoxin reductase (trxB) of Buchnera aphidicola subsp. Schizaphis graminum (strain Sg).